Consider the following 207-residue polypeptide: Protein TEX261 homolog (207 aa).

The next 4 membrane-spanning stretches (helical) occupy residues 2 to 22, 54 to 74, 94 to 114, and 126 to 146; these read FLSLLILLSYALGFVFCVVCL, IIFLLGIFEDLDFTSLLFSFI, YKFILSVLSFIISHISWFIYF, and IIAIFTFCVWLIPLIFFISLA.

It belongs to the SVP26 family.

The protein localises to the membrane. This Dictyostelium discoideum (Social amoeba) protein is Protein TEX261 homolog.